Here is a 1435-residue protein sequence, read N- to C-terminus: Protein SPP41 (1435 aa).

Disordered regions lie at residues 16–74, 88–265, 286–309, 322–424, 442–482, 519–708, and 934–972; these read VGNL…NIEI, VANA…ENTL, AKQTVDIQDNSHTDNTNNEDVEAQ, ELLS…DDEF, ETST…DSLD, SVSD…MKVP, and QQLDKQLPARSAGTEISSSESPDKATPDPHSNSTIAGHT. Residues 27 to 42 are compositionally biased toward acidic residues; the sequence is GQEEGEVQGGEQEGDD. 3 stretches are compositionally biased toward basic and acidic residues: residues 53–63, 98–127, and 139–154; these read IEPKHPDDSQH, EQAKPENHLENGSEHVTSDTADDNHEKEQQ, and LKSDGEPLRENTERRV. Residues 171 to 190 form the UIM domain; it reads QDDENLRMAILESLQELNTN. Over residues 196 to 205 the composition is skewed to basic and acidic residues; sequence EPEKHEHAAP. Residues 211–223 are compositionally biased toward basic residues; the sequence is SKKSSKKKKKDKS. Basic and acidic residues predominate over residues 224–234; it reads KNRESSKDKSS. Basic residues predominate over residues 235-249; that stretch reads KKSKSSSHSKKHAKD. Positions 286-301 are enriched in polar residues; that stretch reads AKQTVDIQDNSHTDNT. A compositionally biased stretch (basic and acidic residues) spans 345–355; the sequence is KAVEPPRKPTA. The span at 367 to 383 shows a compositional bias: basic residues; that stretch reads KPKKRPPQEKKKTKSKT. Over residues 384–398 the composition is skewed to low complexity; it reads SKAASTANKSPASES. 2 stretches are compositionally biased toward polar residues: residues 442–451 and 459–482; these read ETSTHTATQD and DFTSPVQSQYTTEDASTANDDSLD. Composition is skewed to basic and acidic residues over residues 524 to 548, 610 to 628, and 637 to 652; these read LPHDNLSRMEKKSVPKSSSKSEKKT, KNKELKEKEKLERQTAREE, and KQRLAEEQEELKKIVE. Residues 665–674 are compositionally biased toward basic residues; sequence KSGKPKKPYR. Residues 676-691 show a composition bias toward basic and acidic residues; the sequence is WTPEELLKRSQEAEKP. Positions 683–699 match the Nuclear localization signal motif; it reads KRSQEAEKPRKVKKERK. The span at 692–706 shows a compositional bias: basic residues; it reads RKVKKERKKKEKKMK. Lys-981 is covalently cross-linked (Glycyl lysine isopeptide (Lys-Gly) (interchain with G-Cter in SUMO)). Residues 1005-1014 are compositionally biased toward basic and acidic residues; sequence KLELTKRAES. The interval 1005–1125 is disordered; that stretch reads KLELTKRAES…DSVNTTTGKP (121 aa). Position 1014 is a phosphoserine (Ser-1014). A compositionally biased stretch (polar residues) spans 1021 to 1032; it reads NVETAKETQSVQ. 2 stretches are compositionally biased toward basic and acidic residues: residues 1033 to 1082 and 1091 to 1103; these read EIKE…EKIA and LSDKKDGDEKSTL. The residue at position 1067 (Ser-1067) is a Phosphoserine. The span at 1108-1123 shows a compositional bias: polar residues; that stretch reads AQLTGNEPDSVNTTTG. Residue Lys-1154 forms a Glycyl lysine isopeptide (Lys-Gly) (interchain with G-Cter in SUMO) linkage.

Interacts with PRP8 and RAP1.

Its subcellular location is the nucleus. In terms of biological role, negative regulator of PRP3 and PRP4 genes. In Saccharomyces cerevisiae (strain ATCC 204508 / S288c) (Baker's yeast), this protein is Protein SPP41 (SPP41).